The primary structure comprises 134 residues: Cytochrome b (134 aa).

3 helical membrane-spanning segments follow: residues 33-53, 77-98, and 113-133; these read FGSL…FLAM, WVLR…YVHV, and WNVG…GYVL. Heme b is bound by residues histidine 83 and histidine 97.

The protein belongs to the cytochrome b family. As to quaternary structure, the cytochrome bc1 complex contains 11 subunits: 3 respiratory subunits (MT-CYB, CYC1 and UQCRFS1), 2 core proteins (UQCRC1 and UQCRC2) and 6 low-molecular weight proteins (UQCRH/QCR6, UQCRB/QCR7, UQCRQ/QCR8, UQCR10/QCR9, UQCR11/QCR10 and a cleavage product of UQCRFS1). This cytochrome bc1 complex then forms a dimer. The cofactor is heme b.

It is found in the mitochondrion inner membrane. Functionally, component of the ubiquinol-cytochrome c reductase complex (complex III or cytochrome b-c1 complex) that is part of the mitochondrial respiratory chain. The b-c1 complex mediates electron transfer from ubiquinol to cytochrome c. Contributes to the generation of a proton gradient across the mitochondrial membrane that is then used for ATP synthesis. The sequence is that of Cytochrome b (MT-CYB) from Anoura caudifer (Hairy-legged long-tongued bat).